We begin with the raw amino-acid sequence, 394 residues long: Protein TsgA homolog (394 aa).

12 helical membrane passes run 11 to 31 (WISFFSYALTGAVVIVTGMVL), 51 to 71 (FLNAGILLAVFLNAWLMEIVP), 76 to 96 (LIFGFVLMVLAVLGLMNSHSL), 101 to 121 (LCMFVLGVVSGITMSIGTFLI), 135 to 155 (LFTDSFFSMAGTLFPIIAAAI), 163 to 183 (YWVYACIGVIYVAIFILALCF), 205 to 225 (LGVALLAVAALCYILGQLGFI), 245 to 265 (SVVGYFWTAYMIGMWAFSAIL), 273 to 293 (IVTALALASTLLMYWFINTTD), 299 to 319 (WIIMGLGFFSSAIYTTIITLG), 333 to 353 (FILTCGTIGTMLTFVVTGPIV), and 362 to 382 (LATTNSLYAVVFLMCLLLGFV).

It belongs to the major facilitator superfamily. TsgA family.

The protein localises to the cell inner membrane. The polypeptide is Protein TsgA homolog (Erwinia tasmaniensis (strain DSM 17950 / CFBP 7177 / CIP 109463 / NCPPB 4357 / Et1/99)).